Here is a 409-residue protein sequence, read N- to C-terminus: Lysosome-associated membrane glycoprotein 1 (409 aa).

Positions 1 to 25 (MAAPGGARRRPLLLLLFAGLVHGAS) are cleaved as a signal peptide. Residues 26–187 (AVFVVKNGNG…SNFSREETRC (162 aa)) form a first lumenal domain region. The Lumenal segment spans residues 26–374 (AVFVVKNGNG…EECQLDENSM (349 aa)). N34, N59, N72, N80, N103, N117, N126, N146, N161, and N179 each carry an N-linked (GlcNAc...) asparagine glycan. A disulfide bridge connects residues C38 and C76. C151 and C187 are disulfide-bonded. The segment at 180 to 207 (FSREETRCEQDLPTPTTPPQPAPTPAPA) is disordered. Residues 188-219 (EQDLPTPTTPPQPAPTPAPASPAVFRYNVSGS) form a hinge region. A compositionally biased stretch (pro residues) spans 194–207 (PTTPPQPAPTPAPA). 8 N-linked (GlcNAc...) asparagine glycosylation sites follow: N215, N220, N241, N253, N260, N285, N299, and N314. The segment at 220-374 (NGTCLLASMG…EECQLDENSM (155 aa)) is second lumenal domain. Cysteines 223 and 261 form a disulfide. C330 and C367 are joined by a disulfide. A helical transmembrane segment spans residues 375–398 (LIPIAVGGALAGLVLIVLLAYLIG). Residues 399–409 (RKRSHAGYQTI) lie on the Cytoplasmic side of the membrane.

It belongs to the LAMP family. As to quaternary structure, interacts with ABCB9; this interaction strongly stabilizes ABCB9 and protects ABCB9 against lysosomal degradation. Interacts with FURIN. Interacts with TMEM175; inhibiting the proton channel activity of TMEM175. In terms of processing, O- and N-glycosylated; some of the N-glycans attached to LAMP-1 are polylactosaminoglycans.

It localises to the lysosome membrane. The protein resides in the endosome membrane. It is found in the late endosome membrane. The protein localises to the cell membrane. Its subcellular location is the cytolytic granule membrane. Functionally, lysosomal membrane glycoprotein which plays an important role in lysosome biogenesis, lysosomal pH regulation, autophagy and cholesterol homeostasis. Acts as an important regulator of lysosomal lumen pH regulation by acting as a direct inhibitor of the proton channel TMEM175, facilitating lysosomal acidification for optimal hydrolase activity. Also plays an important role in NK-cells cytotoxicity. Mechanistically, participates in cytotoxic granule movement to the cell surface and perforin trafficking to the lytic granule. In addition, protects NK-cells from degranulation-associated damage induced by their own cytotoxic granule content. Presents carbohydrate ligands to selectins. The chain is Lysosome-associated membrane glycoprotein 1 (LAMP1) from Bos taurus (Bovine).